The following is a 131-amino-acid chain: MSMSDPIADLLTRIRNAQMVAKPTVSVPSSKVKIAISQVLKDEGYIDGFQVKTEDGKTELVITLKYYAGRPVIERIERVSRPGLRVYKASASIPQVQNGLGVAIVTTPKGVMTDRKARATGVGGEVLCYVA.

It belongs to the universal ribosomal protein uS8 family. Part of the 30S ribosomal subunit. Contacts proteins S5 and S12.

Its function is as follows. One of the primary rRNA binding proteins, it binds directly to 16S rRNA central domain where it helps coordinate assembly of the platform of the 30S subunit. In Variovorax paradoxus (strain S110), this protein is Small ribosomal subunit protein uS8.